A 3008-amino-acid polypeptide reads, in one-letter code: Genome polyprotein (3008 aa).

Position 2 is an N-acetylserine; by host (serine 2). The interaction with STAT1 stretch occupies residues 2 to 23 (STNPKPQRKTKRNTNRRPMDVK). Residues 2–58 (STNPKPQRKTKRNTNRRPMDVKFPGGGQIVGGVYLLPRRGPRLGVRATRKTSERSQP) form an interaction with EIF2AK2/PKR region. The segment at 2–59 (STNPKPQRKTKRNTNRRPMDVKFPGGGQIVGGVYLLPRRGPRLGVRATRKTSERSQPR) is interaction with DDX3X. The disordered stretch occupies residues 2–75 (STNPKPQRKT…PKARRPEGRS (74 aa)). Residues 2-168 (STNPKPQRKT…EDGINYATGN (167 aa)) lie on the Cytoplasmic side of the membrane. 2 short sequence motifs (nuclear localization signal) span residues 5–13 (PKPQRKTKR) and 38–43 (PRRGPR). Basic residues predominate over residues 7–16 (PQRKTKRNTN). Low complexity predominate over residues 32-47 (GGVYLLPRRGPRLGVR). Phosphoserine; by host is present on serine 53. 2 short sequence motifs (nuclear localization signal) span residues 58 to 64 (PRGRRQP) and 66 to 71 (PKARRP). Residues 58–68 (PRGRRQPIPKA) are compositionally biased toward basic residues. Phosphoserine; by host occurs at positions 99 and 116. Residues 112–152 (PRGRSRNLGKVIDTLTCGFADLMGYIPLVGAPVGSVARALA) form an important for endoplasmic reticulum and mitochondrial localization region. An interaction with APOA2 region spans residues 122 to 173 (VIDTLTCGFADLMGYIPLVGAPVGSVARALAHGVRALEDGINYATGNLPGCS). Positions 164 to 167 (YATG) are important for lipid droplets localization. The helical transmembrane segment at 169–189 (LPGCSFSIFLLALLSCLTVPA) threads the bilayer. The propeptide at 178 to 191 (LLALLSCLTVPASA) is ER anchor for the core protein, removed in mature form by host signal peptidase. The Lumenal segment spans residues 190–358 (SAVNYRNVSG…SGGHWGVLVG (169 aa)). 3 N-linked (GlcNAc...) asparagine; by host glycosylation sites follow: asparagine 196, asparagine 209, and asparagine 234. Residues 265–296 (MVGAATVCSGLYIGDLCGGLFLVGQMFSFRPR) are important for fusion. N-linked (GlcNAc...) asparagine; by host glycosylation occurs at asparagine 305. A helical transmembrane segment spans residues 359-379 (VAYFSMQANWAKVILVLFLFA). At 380–725 (GVDAETHVSG…WEYVVLAFLL (346 aa)) the chain is on the lumenal side. Positions 385–412 (THVSGAAVGRSTAGLANLFSSGSKQNLQ) are HVR1. 3 N-linked (GlcNAc...) (high mannose) asparagine; by host glycosylation sites follow: asparagine 417, asparagine 423, and asparagine 430. 4 cysteine pairs are disulfide-bonded: cysteine 429–cysteine 553, cysteine 452–cysteine 459, cysteine 487–cysteine 495, and cysteine 504–cysteine 509. The N-linked (GlcNAc...) asparagine; by host glycan is linked to asparagine 448. The HVR2 stretch occupies residues 475-479 (ANISG). The N-linked (GlcNAc...) asparagine; by host glycan is linked to asparagine 476. A CD81-binding 1 region spans residues 481–494 (SDDRPYCWHYAPRP). N-linked (GlcNAc...) asparagine; by host glycosylation is present at asparagine 533. The CD81-binding 2 stretch occupies residues 545–552 (PPHGAWFG). Asparagine 557 carries N-linked (GlcNAc...) asparagine; by host glycosylation. 4 disulfides stabilise this stretch: cysteine 565–cysteine 570, cysteine 581–cysteine 585, cysteine 597–cysteine 620, and cysteine 607–cysteine 644. N-linked (GlcNAc...) (high mannose) asparagine; by host glycans are attached at residues asparagine 623 and asparagine 645. Cysteine 652 and cysteine 677 are oxidised to a cystine. The segment at 660–671 (VELSPLLLTTTA) is PKR/eIF2-alpha phosphorylation homology domain (PePHD). Residues 726–746 (LADARVSAYLWMMFMVSQVEA) traverse the membrane as a helical segment. The Lumenal portion of the chain corresponds to 747-757 (ALSNLININAA). Residues 758-778 (SAAGAQGFWYAILFICIVWHV) form a helical membrane-spanning segment. The Cytoplasmic segment spans residues 779 to 782 (KGRF). Residues 783–803 (PAAAAYAACGLWPCFLLLLML) form a helical membrane-spanning segment. Residues 804–813 (PERAYAYDQE) are Lumenal-facing. Residues 814–834 (VAGSLGGAIVVMLTILTLSPH) form a helical membrane-spanning segment. The Cytoplasmic portion of the chain corresponds to 835–881 (YKLWLARGLWWIQYFIARTEAVLHVYIPSFNVRGPRDSVIVLAVLVC). Residues 882 to 902 (PDLVFDITKYLLAILGPLHIL) traverse the membrane as a helical segment. The Lumenal segment spans residues 903-928 (QASLLRIPYFVRAQALVKICSLLRGV). Residues 903-1026 (QASLLRIPYF…TETSKGWRLL (124 aa)) form the Peptidase C18 domain. A protease NS2-3 region spans residues 904–1206 (ASLLRIPYFV…PVESLETTMR (303 aa)). Residue cysteine 922 is the site of S-palmitoyl cysteine; by host attachment. The chain crosses the membrane as a helical span at residues 929–949 (VYGKYFQMVVLKSRGLTGTYI). Positions 929–949 (VYGKYFQMVVLKSRGLTGTYI) are interaction with host SCPS1. Over 950–1657 (YDHLTPMSDW…CMSADLEVVT (708 aa)) the chain is Cytoplasmic. Residues histidine 952, glutamate 972, and cysteine 993 each act as for protease NS2 activity; shared with dimeric partner in the active site. The Peptidase S29 domain maps to 1027–1208 (APITAYAQQT…ESLETTMRSP (182 aa)). Active-site charge relay system; for serine protease NS3 activity residues include histidine 1083 and aspartate 1107. Positions 1123 and 1125 each coordinate Zn(2+). Serine 1165 acts as the Charge relay system; for serine protease NS3 activity in catalysis. Zn(2+) contacts are provided by cysteine 1171 and histidine 1175. Residues 1217 to 1369 (PAVPQTYQVA…SNIEEVALPT (153 aa)) form the Helicase ATP-binding domain. Position 1230–1237 (1230–1237 (APTGSGKS)) interacts with ATP. Mg(2+) is bound by residues serine 1237 and glutamate 1317. Residues 1316 to 1319 (DECY) carry the DECH box motif. Positions 1486 to 1498 (QRRGRTGRGRLGT) are RNA-binding. The chain crosses the membrane as a helical span at residues 1658 to 1678 (STWVLVGGVLAALAAYCLSVG). An NS3-binding region spans residues 1679–1690 (SVVIVGRVVLSG). Topologically, residues 1679–1805 (SVVIVGRVVL…AVTSPLTTQQ (127 aa)) are cytoplasmic. Residues 1806 to 1826 (TLLFNILGGWVASQIRDSDAS) traverse the membrane as a helical segment. Residues 1827-1828 (TA) are Lumenal-facing. A helical membrane pass occupies residues 1829–1849 (FVVSGLAGAAVGSVGLGKILV). Position 1850 (aspartate 1850) is a topological domain, cytoplasmic. Residues 1851–1871 (ILPGYGAGVRGAVVTFKIMSG) form a helical membrane-spanning segment. Residues 1872–1881 (EMPSTEDLVN) lie on the Lumenal side of the membrane. The chain crosses the membrane as a helical span at residues 1882-1902 (LLPAILSPGALVVEVVCPAIL). Residues 1903–1972 (RRHVGPGEGA…WINEDCSTPC (70 aa)) lie on the Cytoplasmic side of the membrane. A lipid anchor (S-palmitoyl cysteine; by host) is attached at cysteine 1972. The stretch at 1973–2002 (AESWLWEVWDWVLHVLSDFKTCLKAKFVPL) is an intramembrane region. Over 2003-2987 (MPGIPLLSWP…YHSMSHARPR (985 aa)) the chain is Cytoplasmic. Residues cysteine 2029, cysteine 2031, and cysteine 2052 each coordinate Zn(2+). An FKBP8-binding region spans residues 2120–2208 (ELFTEVDGIR…ASSSASQLSP (89 aa)). The interval 2120–2329 (ELFTEVDGIR…PVPSPRRKRT (210 aa)) is transcriptional activation. The segment at 2135 to 2139 (PKCKP) is interaction with non-structural protein 4A. Positions 2189–2435 (RLARGSRPSL…ALVTPCAAEE (247 aa)) are interaction with host SKP2. 5 positions are modified to phosphoserine; by host: serine 2194, serine 2197, serine 2201, serine 2204, and serine 2207. The interval 2210–2245 (LLQATCTAPHDSPGTDLLEANLLWGSTATRVETDEK) is ISDR. The interaction with EIF2AK2/PKR stretch occupies residues 2210-2272 (LLQATCTAPH…REVSVAAEIL (63 aa)). An NS4B-binding region spans residues 2245 to 2303 (KVIILDSFESCVAEQNDDREVSVAAEILRPTKKFPPALPIWARPDYNPPLTETWKQQDY). The segment at 2296 to 2373 (ETWKQQDYQA…TPTETTDSGP (78 aa)) is V3. The SH3-binding signature appears at 2319–2322 (PPVP). Residues 2324–2332 (PRRKRTVQL) carry the Nuclear localization signal motif. The segment at 2346-2406 (AKTFGQSEPS…DPDLTSDSWS (61 aa)) is disordered. A Glycyl lysine isopeptide (Lys-Gly) (interchain with G-Cter in ubiquitin) cross-link involves residue lysine 2347. Phosphoserine; by host is present on serine 2446. Residues 2631–2749 (PMGFSYDTRC…IAESDGVEED (119 aa)) form the RdRp catalytic domain. Residues aspartate 2637, aspartate 2735, and aspartate 2736 each coordinate Mg(2+). The helical transmembrane segment at 2988–3008 (YLLLCLLILTVGVGIFLLPAR) threads the bilayer.

It belongs to the hepacivirus polyprotein family. In terms of assembly, homooligomer. Interacts with E1 (via C-terminus). Interacts with the non-structural protein 5A. Interacts (via N-terminus) with host STAT1 (via SH2 domain); this interaction results in decreased STAT1 phosphorylation and ubiquitin-mediated proteasome-dependent STAT1 degradation, leading to decreased IFN-stimulated gene transcription. Interacts with host STAT3; this interaction constitutively activates STAT3. Interacts with host LTBR receptor. Interacts with host TNFRSF1A receptor and possibly induces apoptosis. Interacts with host HNRPK. Interacts with host YWHAE. Interacts with host UBE3A/E6AP. Interacts with host DDX3X. Interacts with host APOA2. Interacts with host RXRA protein. Interacts with host SP110 isoform 3/Sp110b; this interaction sequesters the transcriptional corepressor SP110 away from the nucleus. Interacts with host CREB3 nuclear transcription protein; this interaction triggers cell transformation. Interacts with host ACY3. Interacts with host C1QR1. Interacts with host RBM24; this interaction, which enhances the interaction of the mature core protein with 5'-UTR, may inhibit viral translation and favor replication. Interacts with host EIF2AK2/PKR; this interaction induces the autophosphorylation of EIF2AK2. Part of the viral assembly initiation complex composed of NS2, E1, E2, NS3, NS4A, NS5A and the mature core protein. As to quaternary structure, forms a heterodimer with envelope glycoprotein E2. Interacts with mature core protein. Interacts with protease NS2. The heterodimer E1/E2 interacts with host CLDN1; this interaction plays a role in viral entry into host cell. Interacts with host SPSB2 (via C-terminus). Part of the viral assembly initiation complex composed of NS2, E1, E2, NS3, NS4A, NS5A and the mature core protein. Interacts with host NEURL3; this interaction prevents E1 binding to glycoprotein E2. Forms a heterodimer with envelope glycoprotein E1. Interacts with host CD81 and SCARB1 receptors; these interactions play a role in viral entry into host cell. Interacts with host EIF2AK2/PKR; this interaction inhibits EIF2AK2 and probably allows the virus to evade the innate immune response. Interacts with host CD209/DC-SIGN and CLEC4M/DC-SIGNR. Interact with host SPCS1; this interaction is essential for viral particle assembly. Interacts with protease NS2. The heterodimer E1/E2 interacts with host CLDN1; this interaction plays a role in viral entry into host cell. Part of the viral assembly initiation complex composed of NS2, E1, E2, NS3, NS4A, NS5A and the mature core protein. Interacts with host SLC3A2/4F2hc; the interaction may facilitate viral entry into host cell. Interacts with human PLSCR1. In terms of assembly, homohexamer. Homoheptamer. Interacts with protease NS2. As to quaternary structure, homodimer. Interacts with host SPCS1; this interaction is essential for viral particle assembly. Interacts with envelope glycoprotein E1. Interacts with envelope glycoprotein E2. Interacts with viroporin p7. Interacts with serine protease/helicase NS3. Part of the replication complex composed of NS2, NS3, NS4A, NS4B, NS5A and the RNA-directed RNA polymerase embedded in an ER-derived membranous web. Part of the viral assembly initiation complex composed of NS2, E1, E2, NS3, NS4A, NS5A and the mature core protein. Interacts with protease NS2. Interacts with non-structural protein 4A; this interaction stabilizes the folding of NS3 serine protease. NS3-NS4A interaction is essential for NS3 activation and allows membrane anchorage of the latter. NS3/NS4A complex also prevents phosphorylation of host IRF3, thus preventing the establishment of dsRNA induced antiviral state. Interacts with host MAVS; this interaction leads to the cleavage and inhibition of host MAVS. Interacts with host TICAM1; this interaction leads to the cleavage and inhibition of host TICAM1. Interacts with host TANK-binding kinase/TBK1; this interaction results in the inhibition of the association between TBK1 and IRF3, which leads to the inhibition of IRF3 activation. Interacts with host RBM24. Part of the replication complex composed of NS2, NS3, NS4A, NS4B, NS5A and the RNA-directed RNA polymerase embedded in an ER-derived membranous web. Part of the viral assembly initiation complex composed of NS2, E1, E2, NS3, NS4A, NS5A and the mature core protein. In terms of assembly, interacts with NS3 serine protease; this interaction stabilizes the folding of NS3 serine protease. NS3-NS4A interaction is essential for NS3 activation and allows membrane anchorage of the latter. Interacts with non-structural protein 5A (via N-terminus). Part of the replication complex composed of NS2, NS3, NS4A, NS4B, NS5A and the RNA-directed RNA polymerase embedded in an ER-derived membranous web. Part of the viral assembly initiation complex composed of NS2, E1, E2, NS3, NS4A, NS5A and the mature core protein. As to quaternary structure, homomultimer. Interacts with non-structural protein NS5A. Interacts with host PLA2G4C; this interaction likely initiates the recruitment of replication complexes to lipid droplets. Interacts with host STING; this interaction disrupts the interaction between STING and TBK1 thereby suppressing the interferon signaling. Part of the replication complex composed of NS2, NS3, NS4A, NS4B, NS5A and the RNA-directed RNA polymerase embedded in an ER-derived membranous web. Monomer. Homodimer; dimerization is required for RNA-binding. Interacts with the mature core protein. Interacts (via N-terminus) with non-structural protein 4A. Interacts with non-structural protein 4B. Interacts (via region D2) with RNA-directed RNA polymerase. Part of the viral assembly initiation complex composed of NS2, E1, E2, NS3, NS4A, NS5A and the mature core protein. Part of the replication complex composed of NS2, NS3, NS4A, NS4B, NS5A and the RNA-directed RNA polymerase embedded in an ER-derived membranous web. Interacts with host GRB2. Interacts with host BIN1. Interacts with host PIK3R1. Interacts with host SRCAP. Interacts with host FKBP8. Interacts (via C-terminus) with host VAPB (via MSP domain). Interacts with host EIF2AK2/PKR; this interaction leads to disruption of EIF2AK2 dimerization by NS5A and probably allows the virus to evade the innate immune response. Interacts (via N-terminus) with host PACSIN2 (via N-terminus); this interaction attenuates protein kinase C alpha-mediated phosphorylation of PACSIN2 by disrupting the interaction between PACSIN2 and PRKCA. Interacts (via N-terminus) with host SRC kinase (via SH2 domain). Interacts with most Src-family kinases. Interacts with host IFI27 and SKP2; promotes the ubiquitin-mediated proteasomal degradation of NS5A. Interacts with host GPS2. Interacts with host TNFRSF21; this interaction allows the modulation by the virus of JNK, p38 MAPK, STAT3, and Akt signaling pathways in a DR6-dependent manner. Interacts (via N-terminus) with host CIDEB (via N-terminus); this interaction seems to regulate the association of HCV particles with APOE. Interacts with host CHKA/Choline Kinase-alpha; CHKA bridges host PI4KA and NS5A and potentiates NS5A-stimulated PI4KA activity, which then facilitates the targeting of the ternary complex to the ER for viral replication. Interacts with host SPSB2 (via C-terminus); this interaction targets NS5A for ubiquitination and degradation. Interacts with host RAB18; this interaction may promote the association of NS5A and other replicase components with lipid droplets. Interacts (via region D2) with host PPIA/CYPA; the interaction stimulates RNA-binding ability of NS5A and is dependent on the peptidyl-prolyl cis-trans isomerase activity of PPIA/CYPA. Interacts with host TRIM14; this interaction induces the degradation of NS5A. In terms of assembly, homooligomer. Interacts with non-structural protein 5A. Interacts with host VAPB. Interacts with host PRK2/PKN2. Interacts with host HNRNPA1 and SEPT6; these interactions facilitate viral replication. Part of the replication complex composed of NS2, NS3, NS4A, NS4B, NS5A and the RNA-directed RNA polymerase. Requires Zn(2+) as cofactor. It depends on Mg(2+) as a cofactor. Specific enzymatic cleavages in vivo yield mature proteins. The structural proteins, core, E1, E2 and p7 are produced by proteolytic processing by host signal peptidases. The core protein precursor is synthesized as a 23 kDa, which is retained in the ER membrane through the hydrophobic signal peptide. Cleavage by the signal peptidase releases the 21 kDa mature core protein. The cleavage of the core protein precursor occurs between aminoacids 176 and 188 but the exact cleavage site is not known. Some degraded forms of the core protein appear as well during the course of infection. The other proteins (p7, NS2, NS3, NS4A, NS4B, NS5A and NS5B) are cleaved by the viral proteases. Autoprocessing between NS2 and NS3 is mediated by the NS2 cysteine protease catalytic domain and regulated by the NS3 N-terminal domain. Post-translationally, phosphorylated by host PKC and PKA. In terms of processing, ubiquitinated; mediated by UBE3A and leading to core protein subsequent proteasomal degradation. Highly N-glycosylated. Post-translationally, palmitoylation is required for NS2/3 autoprocessing and E2 recruitment to membranes. In terms of processing, palmitoylated. This modification may play a role in its polymerization or in protein-protein interactions. Phosphorylated on serines in a basal form termed p56. p58 is a hyperphosphorylated form of p56. p56 and p58 coexist in the cell in roughly equivalent amounts. Hyperphosphorylation is dependent on the presence of NS4A. Host CSNK1A1/CKI-alpha or RPS6KB1 kinases may be responsible for NS5A phosphorylation. Post-translationally, tyrosine phosphorylation is essential for the interaction with host SRC. In terms of processing, the N-terminus is phosphorylated by host PRK2/PKN2.

It is found in the host endoplasmic reticulum membrane. The protein localises to the host mitochondrion membrane. Its subcellular location is the virion. The protein resides in the host cytoplasm. It localises to the host nucleus. It is found in the host lipid droplet. The protein localises to the virion membrane. Its subcellular location is the host mitochondrion. The protein resides in the host cell membrane. It localises to the host perinuclear region. It carries out the reaction Hydrolysis of four peptide bonds in the viral precursor polyprotein, commonly with Asp or Glu in the P6 position, Cys or Thr in P1 and Ser or Ala in P1'.. The enzyme catalyses a ribonucleoside 5'-triphosphate + H2O = a ribonucleoside 5'-diphosphate + phosphate + H(+). The catalysed reaction is ATP + H2O = ADP + phosphate + H(+). It catalyses the reaction RNA(n) + a ribonucleoside 5'-triphosphate = RNA(n+1) + diphosphate. With respect to regulation, inhibited by the antiviral drug hexamethylene amiloride. Inhibition by amantadine appears to be genotype-dependent. Also inhibited by long-alkyl-chain iminosugar derivatives. Its activity is regulated as follows. Activity is up-regulated by PRK2/PKN2-mediated phosphorylation. In terms of biological role, packages viral RNA to form a viral nucleocapsid, and promotes virion budding. Participates in the viral particle production as a result of its interaction with the non-structural protein 5A. Binds RNA and may function as a RNA chaperone to induce the RNA structural rearrangements taking place during virus replication. Modulates viral translation initiation by interacting with viral IRES and 40S ribosomal subunit. Affects various cell signaling pathways, host immunity and lipid metabolism. Prevents the establishment of cellular antiviral state by blocking the interferon-alpha/beta (IFN-alpha/beta) and IFN-gamma signaling pathways and by blocking the formation of phosphorylated STAT1 and promoting ubiquitin-mediated proteasome-dependent degradation of STAT1. Activates STAT3 leading to cellular transformation. Regulates the activity of cellular genes, including c-myc and c-fos. May repress the promoter of p53, and sequester CREB3 and SP110 isoform 3/Sp110b in the cytoplasm. Represses cell cycle negative regulating factor CDKN1A, thereby interrupting an important check point of normal cell cycle regulation. Targets transcription factors involved in the regulation of inflammatory responses and in the immune response: suppresses TNF-induced NF-kappa-B activation, and activates AP-1. Binds to dendritic cells (DCs) via C1QR1, resulting in down-regulation of T-lymphocytes proliferation. Alters lipid metabolism by interacting with hepatocellular proteins involved in lipid accumulation and storage. Induces up-regulation of FAS promoter activity, and thereby contributes to the increased triglyceride accumulation in hepatocytes (steatosis). Its function is as follows. Forms a heterodimer with envelope glycoprotein E2, which mediates virus attachment to the host cell, virion internalization through clathrin-dependent endocytosis and fusion with host membrane. Fusion with the host cell is most likely mediated by both E1 and E2, through conformational rearrangements of the heterodimer required for fusion rather than a classical class II fusion mechanism. E1/E2 heterodimer binds host apolipoproteins such as APOB and ApoE thereby forming a lipo-viro-particle (LVP). APOE associated to the LVP allows the initial virus attachment to cell surface receptors such as the heparan sulfate proteoglycans (HSPGs), syndecan-1 (SDC1), syndecan-1 (SDC2), the low-density lipoprotein receptor (LDLR) and scavenger receptor class B type I (SCARB1). The cholesterol transfer activity of SCARB1 allows E2 exposure and binding of E2 to SCARB1 and the tetraspanin CD81. E1/E2 heterodimer binding on CD81 activates the epithelial growth factor receptor (EGFR) signaling pathway. Diffusion of the complex E1-E2-EGFR-SCARB1-CD81 to the cell lateral membrane allows further interaction with Claudin 1 (CLDN1) and occludin (OCLN) to finally trigger HCV entry. Functionally, forms a heterodimer with envelope glycoprotein E1, which mediates virus attachment to the host cell, virion internalization through clathrin-dependent endocytosis and fusion with host membrane. Fusion with the host cell is most likely mediated by both E1 and E2, through conformational rearrangements of the heterodimer required for fusion rather than a classical class II fusion mechanism. The interaction between envelope glycoprotein E2 and host apolipoprotein E/APOE allows the proper assembly, maturation and infectivity of the viral particles. This interaction is probably promoted via the up-regulation of cellular autophagy by the virus. E1/E2 heterodimer binds host apolipoproteins such as APOB and APOE thereby forming a lipo-viro-particle (LVP). APOE associated to the LVP allows the initial virus attachment to cell surface receptors such as the heparan sulfate proteoglycans (HSPGs), syndecan-1 (SDC1), syndecan-1 (SDC2), the low-density lipoprotein receptor (LDLR) and scavenger receptor class B type I (SCARB1). The cholesterol transfer activity of SCARB1 allows E2 exposure and binding of E2 to SCARB1 and the tetraspanin CD81. E1/E2 heterodimer binding on CD81 activates the epithelial growth factor receptor (EGFR) signaling pathway. Diffusion of the complex E1-E2-EGFR-SCARB1-CD81 to the cell lateral membrane allows further interaction with Claudin 1 (CLDN1) and occludin (OCLN) to finally trigger HCV entry. Inhibits host EIF2AK2/PKR activation, preventing the establishment of an antiviral state. Viral ligand for CD209/DC-SIGN and CLEC4M/DC-SIGNR, which are respectively found on dendritic cells (DCs), and on liver sinusoidal endothelial cells and macrophage-like cells of lymph node sinuses. These interactions allow the capture of circulating HCV particles by these cells and subsequent facilitated transmission to permissive cells such as hepatocytes and lymphocyte subpopulations. The interaction between E2 and host amino acid transporter complex formed by SLC3A2 and SLC7A5/LAT1 may facilitate viral entry into host cell. Ion channel protein that acts as a viroporin and plays an essential role in the assembly, envelopment and secretion of viral particles. Regulates the host cell secretory pathway, which induces the intracellular retention of viral glycoproteins and favors assembly of viral particles. Creates a pore in acidic organelles and releases Ca(2+) and H(+) in the cytoplasm of infected cells, leading to a productive viral infection. High levels of cytoplasmic Ca(2+) may trigger membrane trafficking and transport of viral ER-associated proteins to viroplasms, sites of viral genome replication. This ionic imbalance induces the assembly of the inflammasome complex, which triggers the maturation of pro-IL-1beta into IL-1beta through the action of caspase-1. Targets also host mitochondria and induces mitochondrial depolarization. In addition of its role as a viroporin, acts as a lipid raft adhesion factor. In terms of biological role, cysteine protease required for the proteolytic auto-cleavage between the non-structural proteins NS2 and NS3. The N-terminus of NS3 is required for the function of NS2 protease (active region NS2-3). Promotes the initiation of viral particle assembly by mediating the interaction between structural and non-structural proteins. Its function is as follows. Displays three enzymatic activities: serine protease with a chymotrypsin-like fold, NTPase and RNA helicase. NS3 serine protease, in association with NS4A, is responsible for the cleavages of NS3-NS4A, NS4A-NS4B, NS4B-NS5A and NS5A-NS5B. The NS3/NS4A complex prevents phosphorylation of host IRF3, thus preventing the establishment of dsRNA induced antiviral state. The NS3/NS4A complex induces host amino acid transporter component SLC3A2, thus contributing to HCV propagation. NS3 RNA helicase binds to RNA and unwinds both dsDNA and dsRNA in the 3' to 5' direction, and likely resolves RNA complicated stable secondary structures in the template strand. Binds a single ATP and catalyzes the unzipping of a single base pair of dsRNA. Inhibits host antiviral proteins TBK1 and IRF3 thereby preventing the establishment of an antiviral state. Cleaves host MAVS/CARDIF thereby preventing the establishment of an antiviral state. Cleaves host TICAM1/TRIF, thereby disrupting TLR3 signaling and preventing the establishment of an antiviral state. Functionally, induces a specific membrane alteration that serves as a scaffold for the virus replication complex. This membrane alteration gives rise to the so-called ER-derived membranous web that contains the replication complex. NS4B self-interaction contributes to its function in membranous web formation. Promotes host TRIF protein degradation in a CASP8-dependent manner thereby inhibiting host TLR3-mediated interferon signaling. Disrupts the interaction between STING and TBK1 contributing to the inhibition of interferon signaling. Phosphorylated protein that is indispensable for viral replication and assembly. Both hypo- and hyperphosphorylated states are required for the viral life cycle. The hyperphosphorylated form of NS5A is an inhibitor of viral replication. Involved in RNA-binding and especially in binding to the viral genome. Zinc is essential for RNA-binding. Participates in the viral particle production as a result of its interaction with the mature viral core protein. Its interaction with host VAPB may target the viral replication complex to vesicles. Down-regulates viral IRES translation initiation. Mediates interferon resistance, presumably by interacting with and inhibiting host EIF2AK2/PKR. Prevents BIN1-induced apoptosis. Acts as a transcriptional activator of some host genes important for viral replication when localized in the nucleus. Via the interaction with host PACSIN2, modulates lipid droplet formation in order to promote virion assembly. Modulates TNFRSF21/DR6 signaling pathway for viral propagation. In terms of biological role, RNA-dependent RNA polymerase that performs primer-template recognition and RNA synthesis during viral replication. Initiates RNA transcription/replication at a flavin adenine dinucleotide (FAD), resulting in a 5'- FAD cap on viral RNAs. In this way, recognition of viral 5' RNA by host pattern recognition receptors can be bypassed, thereby evading activation of antiviral pathways. This is Genome polyprotein from Homo sapiens (Human).